A 386-amino-acid chain; its full sequence is Nucleosome assembly protein 1-like 4 (386 aa).

The disordered stretch occupies residues Met-1–Asp-29. Ala-2 bears the N-acetylalanine mark. Ser-5, Ser-7, and Ser-12 each carry phosphoserine. The span at Asn-20–Asp-29 shows a compositional bias: polar residues. Ser-49 is modified (phosphoserine). At Thr-51 the chain carries Phosphothreonine. Residues Ser-53 and Ser-54 each carry the phosphoserine modification. Position 58 is a phosphothreonine (Thr-58). Lys-105 is modified (N6-acetyllysine). The residue at position 125 (Ser-125) is a Phosphoserine. Lys-146 carries the post-translational modification N6-acetyllysine. Positions Ile-265–His-271 match the Nuclear localization signal motif. Ser-304 carries the post-translational modification Phosphoserine. Acidic residues predominate over residues Ala-339–Glu-370. The disordered stretch occupies residues Ala-339–Gln-386.

Belongs to the nucleosome assembly protein (NAP) family. As to quaternary structure, interacts with core (H2A, H2B, H3, H4) and linker (H1) histones. Polyglutamylated and polyglycylated. These 2 modifications occur exclusively on glutamate residues and result in either polyglutamate or polyglycine chains on the gamma-carboxyl group. Both modifications can coexist on the same protein on adjacent residues, and lowering polyglycylation levels increases polyglutamylation, and reciprocally. Polyglutamylated by TTLL4. Post-translationally, phosphorylated at the G0/G1 boundary but it is not phosphorylated in S-phase. Phosphorylated protein remains in the cytoplasm in a complex with histones during the G0/G1 transition, whereas dephosphorylation triggers its transport into the nucleus at the G1/S-boundary.

It localises to the nucleus. The protein resides in the cytoplasm. Acts as a histone chaperone in nucleosome assembly. This chain is Nucleosome assembly protein 1-like 4 (NAP1L4), found in Bos taurus (Bovine).